The sequence spans 259 residues: 4-hydroxy-tetrahydrodipicolinate reductase (259 aa).

NAD(+) contacts are provided by residues 8–13 (GFKGRM), 93–95 (GTT), and 119–122 (APNF). The Proton donor/acceptor role is filled by His149. His150 lines the (S)-2,3,4,5-tetrahydrodipicolinate pocket. The active-site Proton donor is the Lys153. 159-160 (GT) is a binding site for (S)-2,3,4,5-tetrahydrodipicolinate.

Belongs to the DapB family.

The protein resides in the cytoplasm. The enzyme catalyses (S)-2,3,4,5-tetrahydrodipicolinate + NAD(+) + H2O = (2S,4S)-4-hydroxy-2,3,4,5-tetrahydrodipicolinate + NADH + H(+). It carries out the reaction (S)-2,3,4,5-tetrahydrodipicolinate + NADP(+) + H2O = (2S,4S)-4-hydroxy-2,3,4,5-tetrahydrodipicolinate + NADPH + H(+). It participates in amino-acid biosynthesis; L-lysine biosynthesis via DAP pathway; (S)-tetrahydrodipicolinate from L-aspartate: step 4/4. Catalyzes the conversion of 4-hydroxy-tetrahydrodipicolinate (HTPA) to tetrahydrodipicolinate. This Enterococcus faecalis (strain ATCC 700802 / V583) protein is 4-hydroxy-tetrahydrodipicolinate reductase.